The chain runs to 89 residues: UPF0297 protein lp_2275 (89 aa).

Belongs to the UPF0297 family.

This Lactiplantibacillus plantarum (strain ATCC BAA-793 / NCIMB 8826 / WCFS1) (Lactobacillus plantarum) protein is UPF0297 protein lp_2275.